A 204-amino-acid chain; its full sequence is Urease accessory protein UreG (204 aa).

12 to 19 contributes to the GTP binding site; the sequence is GPVGSGKT.

It belongs to the SIMIBI class G3E GTPase family. UreG subfamily. Homodimer. UreD, UreF and UreG form a complex that acts as a GTP-hydrolysis-dependent molecular chaperone, activating the urease apoprotein by helping to assemble the nickel containing metallocenter of UreC. The UreE protein probably delivers the nickel.

The protein resides in the cytoplasm. Functionally, facilitates the functional incorporation of the urease nickel metallocenter. This process requires GTP hydrolysis, probably effectuated by UreG. This is Urease accessory protein UreG from Pseudomonas paraeruginosa (strain DSM 24068 / PA7) (Pseudomonas aeruginosa (strain PA7)).